A 434-amino-acid chain; its full sequence is GTPase Obg (434 aa).

An Obg domain is found at methionine 1 to leucine 159. Residues alanine 160–glutamine 329 form the OBG-type G domain. Residues glycine 166–serine 173, phenylalanine 191–valine 195, aspartate 212–glycine 215, asparagine 282–aspartate 285, and isoleucine 310–alanine 312 each bind GTP. Residues serine 173 and threonine 193 each contribute to the Mg(2+) site. Residues glutamate 356–glutamate 434 form the OCT domain.

This sequence belongs to the TRAFAC class OBG-HflX-like GTPase superfamily. OBG GTPase family. Monomer. Requires Mg(2+) as cofactor.

It localises to the cytoplasm. In terms of biological role, an essential GTPase which binds GTP, GDP and possibly (p)ppGpp with moderate affinity, with high nucleotide exchange rates and a fairly low GTP hydrolysis rate. Plays a role in control of the cell cycle, stress response, ribosome biogenesis and in those bacteria that undergo differentiation, in morphogenesis control. The protein is GTPase Obg of Mycoplasmoides gallisepticum (strain R(low / passage 15 / clone 2)) (Mycoplasma gallisepticum).